We begin with the raw amino-acid sequence, 218 residues long: Cytochrome b6 (218 aa).

The helical transmembrane segment at 35–55 (IFYCLGGITLVCFLIQFATGF) threads the bilayer. A heme c-binding site is contributed by Cys-38. Heme b contacts are provided by His-89 and His-103. The next 3 helical transmembrane spans lie at 93 to 113 (ASMMVLMLILHVFRVYLTGGF), 119 to 139 (LTWVTGVVMAVITVAFGVTGY), and 189 to 209 (LHTFVLPWTLAIFMLMHFLMI). Residues His-190 and His-205 each contribute to the heme b site.

The protein belongs to the cytochrome b family. PetB subfamily. In terms of assembly, the 4 large subunits of the cytochrome b6-f complex are cytochrome b6, subunit IV (17 kDa polypeptide, PetD), cytochrome f and the Rieske protein, while the 4 small subunits are PetG, PetL, PetM and PetN. The complex functions as a dimer. The cofactor is heme b. Requires heme c as cofactor.

The protein resides in the cellular thylakoid membrane. In terms of biological role, component of the cytochrome b6-f complex, which mediates electron transfer between photosystem II (PSII) and photosystem I (PSI), cyclic electron flow around PSI, and state transitions. The sequence is that of Cytochrome b6 from Prochlorococcus marinus (strain SARG / CCMP1375 / SS120).